A 392-amino-acid chain; its full sequence is Galactokinase (392 aa).

The alpha-D-galactose site is built by Arg-37, Glu-43, His-44, and Asp-46. The ATP site is built by Gly-136, Gly-138, Ser-140, and Ser-141. Asp-186 serves as a coordination point for alpha-D-galactose. Catalysis depends on Asp-186, which acts as the Proton acceptor. Ser-230 carries the post-translational modification Phosphoserine. An alpha-D-galactose-binding site is contributed by Tyr-236.

It belongs to the GHMP kinase family. GalK subfamily. Homodimer.

The catalysed reaction is alpha-D-galactose + ATP = alpha-D-galactose 1-phosphate + ADP + H(+). The protein operates within carbohydrate metabolism; galactose metabolism. Functionally, catalyzes the transfer of a phosphate from ATP to alpha-D-galactose and participates in the first committed step in the catabolism of galactose. The polypeptide is Galactokinase (Homo sapiens (Human)).